We begin with the raw amino-acid sequence, 89 residues long: Small ribosomal subunit protein uS14 (89 aa).

Belongs to the universal ribosomal protein uS14 family. Part of the 30S ribosomal subunit. Contacts proteins S3 and S10.

Functionally, binds 16S rRNA, required for the assembly of 30S particles and may also be responsible for determining the conformation of the 16S rRNA at the A site. The sequence is that of Small ribosomal subunit protein uS14 from Amoebophilus asiaticus (strain 5a2).